A 579-amino-acid chain; its full sequence is MSASSLLEQRPKGQGNKVQNGSVHQKDGLNDDDFEPYLSPQARPNNAYTAMSDSYLPSYYSPSIGFSYSLGEAAWSTGGDTAMPYLTSYGQLSNGEPHFLPDAMFGQPGALGSTPFLGQHGFNFFPSGIDFSAWGNNSSQGQSTQSSGYSSNYAYAPSSLGGAMIDGQSAFANETLNKAPGMNTIDQGMAALKLGSTEVASSVPKVVGSAVGSGSITSNIVASSSLPPATIAPPKPASWADIASKPAKQQPKLKTKNGIAGSSLPPPPIKHNMDIGTWDNKGPVAKAPSQALVQNIGQPTQGSPQPVGQQANNSPPVAQASVGQQTQPLPPPPPQPAQLSVQQQAAQPTRWVAPRNRGSGFGHNGVDGNGVGQSQAGSGSTPSEPHPVLEKLRSINNYNPKDFDWNLKHGRVFIIKSYSEDDIHRSIKYNIWCSTEHGNKRLDAAYRSMNGKGPVYLLFSVNGSGHFCGVAEMKSAVDYNTCAGVWSQDKWKGRFDVRWIFVKDVPNSQLRHIRLENNENKPVTNSRDTQEVPLEKAKQVLKIIASYKHTTSIFDDFSHYEKRQEEEESVKKERQGRGK.

Residues 1 to 45 (MSASSLLEQRPKGQGNKVQNGSVHQKDGLNDDDFEPYLSPQARPN) form a disordered region. S2 is subject to N-acetylserine. A phosphoserine mark is found at S2, S4, S5, S22, S39, and S196. Residues 2 to 384 (SASSLLEQRP…QAGSGSTPSE (383 aa)) are localization to mRNA processing bodies (P-bodies). Positions 247–387 (AKQQPKLKTK…SGSTPSEPHP (141 aa)) are disordered. Over residues 291–316 (ALVQNIGQPTQGSPQPVGQQANNSPP) the composition is skewed to polar residues. Positions 337–349 (AQLSVQQQAAQPT) are enriched in low complexity. A Phosphoserine modification is found at S359. Over residues 359–371 (SGFGHNGVDGNGV) the composition is skewed to gly residues. Polar residues predominate over residues 372 to 383 (GQSQAGSGSTPS). Residues 385–579 (PHPVLEKLRS…VKKERQGRGK (195 aa)) form an interaction with m6A-containing mRNAs region. S394 is subject to Phosphoserine. Residues 410-544 (GRVFIIKSYS…EKAKQVLKII (135 aa)) enclose the YTH domain. RNA-binding positions include 416–418 (KSY), D422, 432–433 (WC), N462, W486, and W491.

The protein belongs to the YTHDF family. YTHDF2 subfamily. As to quaternary structure, interacts with CNOT1; interaction is direct and promotes recruitment of the CCR4-NOT complex. Interacts with YTHDF3. Interacts with RIDA/HRSP12; interaction leads to recruitment of the ribonuclease P/MRP complex. Ubiquitinated by the SCF(SKP2) complex, leading to its degradation. Widely expressed, with highest expression in testis.

The protein localises to the cytoplasm. It is found in the cytosol. Its subcellular location is the P-body. The protein resides in the stress granule. It localises to the nucleus. In terms of biological role, specifically recognizes and binds N6-methyladenosine (m6A)-containing RNAs, and regulates their stability. M6A is a modification present at internal sites of mRNAs and some non-coding RNAs and plays a role in mRNA stability and processing. Acts as a regulator of mRNA stability by promoting degradation of m6A-containing mRNAs via interaction with the CCR4-NOT and ribonuclease P/MRP complexes, depending on the context. The YTHDF paralogs (YTHDF1, YTHDF2 and YTHDF3) share m6A-containing mRNAs targets and act redundantly to mediate mRNA degradation and cellular differentiation. M6A-containing mRNAs containing a binding site for RIDA/HRSP12 (5'-GGUUC-3') are preferentially degraded by endoribonucleolytic cleavage: cooperative binding of RIDA/HRSP12 and YTHDF2 to transcripts leads to recruitment of the ribonuclease P/MRP complex. Other m6A-containing mRNAs undergo deadenylation via direct interaction between YTHDF2 and CNOT1, leading to recruitment of the CCR4-NOT and subsequent deadenylation of m6A-containing mRNAs. Required maternally to regulate oocyte maturation: probably acts by binding to m6A-containing mRNAs, thereby regulating maternal transcript dosage during oocyte maturation, which is essential for the competence of oocytes to sustain early zygotic development. Also required during spermatogenesis: regulates spermagonial adhesion by promoting degradation of m6A-containing transcripts coding for matrix metallopeptidases. Also involved in hematopoietic stem cells specification by binding to m6A-containing mRNAs, leading to promote their degradation. Also acts as a regulator of neural development by promoting m6A-dependent degradation of neural development-related mRNA targets. Inhibits neural specification of induced pluripotent stem cells by binding to methylated neural-specific mRNAs and promoting their degradation, thereby restraining neural differentiation. Regulates circadian regulation of hepatic lipid metabolism: acts by promoting m6A-dependent degradation of PPARA transcripts. Regulates the innate immune response to infection by inhibiting the type I interferon response: acts by binding to m6A-containing IFNB transcripts and promoting their degradation. May also act as a promoter of cap-independent mRNA translation following heat shock stress: upon stress, relocalizes to the nucleus and specifically binds mRNAs with some m6A methylation mark at their 5'-UTR, protecting demethylation of mRNAs by FTO, thereby promoting cap-independent mRNA translation. Regulates mitotic entry by promoting the phase-specific m6A-dependent degradation of WEE1 transcripts. Promotes formation of phase-separated membraneless compartments, such as P-bodies or stress granules, by undergoing liquid-liquid phase separation upon binding to mRNAs containing multiple m6A-modified residues: polymethylated mRNAs act as a multivalent scaffold for the binding of YTHDF proteins, juxtaposing their disordered regions and thereby leading to phase separation. The resulting mRNA-YTHDF complexes then partition into different endogenous phase-separated membraneless compartments, such as P-bodies, stress granules or neuronal RNA granules. May also recognize and bind RNAs modified by C5-methylcytosine (m5C) and act as a regulator of rRNA processing. This chain is YTH domain-containing family protein 2, found in Mus musculus (Mouse).